We begin with the raw amino-acid sequence, 334 residues long: Nucleoid-associated protein YPTS_1390 (334 aa).

It belongs to the YejK family.

It localises to the cytoplasm. It is found in the nucleoid. This Yersinia pseudotuberculosis serotype IB (strain PB1/+) protein is Nucleoid-associated protein YPTS_1390.